The primary structure comprises 335 residues: Holliday junction branch migration complex subunit RuvB (335 aa).

Residues 4 to 184 are large ATPase domain (RuvB-L); the sequence is ADRIISGQAK…FGIVQRLEFY (181 aa). ATP contacts are provided by residues Ile23, Arg24, Gly65, Lys68, Thr69, Thr70, 131-133, Arg174, Tyr184, and Arg221; that span reads EDY. Position 69 (Thr69) interacts with Mg(2+). Positions 185–255 are small ATPAse domain (RuvB-S); it reads SVEDLTSIVA…VAKQALSMLD (71 aa). Residues 258-335 are head domain (RuvB-H); sequence DAGFDYLDRK…RHFGLQKLSD (78 aa). DNA is bound by residues Arg294, Arg313, and Arg318.

This sequence belongs to the RuvB family. Homohexamer. Forms an RuvA(8)-RuvB(12)-Holliday junction (HJ) complex. HJ DNA is sandwiched between 2 RuvA tetramers; dsDNA enters through RuvA and exits via RuvB. An RuvB hexamer assembles on each DNA strand where it exits the tetramer. Each RuvB hexamer is contacted by two RuvA subunits (via domain III) on 2 adjacent RuvB subunits; this complex drives branch migration. In the full resolvosome a probable DNA-RuvA(4)-RuvB(12)-RuvC(2) complex forms which resolves the HJ.

It is found in the cytoplasm. It carries out the reaction ATP + H2O = ADP + phosphate + H(+). Its function is as follows. The RuvA-RuvB-RuvC complex processes Holliday junction (HJ) DNA during genetic recombination and DNA repair, while the RuvA-RuvB complex plays an important role in the rescue of blocked DNA replication forks via replication fork reversal (RFR). RuvA specifically binds to HJ cruciform DNA, conferring on it an open structure. The RuvB hexamer acts as an ATP-dependent pump, pulling dsDNA into and through the RuvAB complex. RuvB forms 2 homohexamers on either side of HJ DNA bound by 1 or 2 RuvA tetramers; 4 subunits per hexamer contact DNA at a time. Coordinated motions by a converter formed by DNA-disengaged RuvB subunits stimulates ATP hydrolysis and nucleotide exchange. Immobilization of the converter enables RuvB to convert the ATP-contained energy into a lever motion, pulling 2 nucleotides of DNA out of the RuvA tetramer per ATP hydrolyzed, thus driving DNA branch migration. The RuvB motors rotate together with the DNA substrate, which together with the progressing nucleotide cycle form the mechanistic basis for DNA recombination by continuous HJ branch migration. Branch migration allows RuvC to scan DNA until it finds its consensus sequence, where it cleaves and resolves cruciform DNA. The sequence is that of Holliday junction branch migration complex subunit RuvB from Haemophilus influenzae (strain 86-028NP).